The chain runs to 759 residues: Subtilisin-like protease SBT3.10 (759 aa).

The first 25 residues, 1 to 25 (MSKTIILLAFFLSIVLNVQISFVVA), serve as a signal peptide directing secretion. Residues 26 to 108 (ESKVYVVYLG…VIPNTLYEMT (83 aa)) constitute a propeptide, activation peptide. Residues 29–106 (VYVVYLGEKE…VQVIPNTLYE (78 aa)) form the Inhibitor I9 domain. A Peptidase S8 domain is found at 112-606 (TWDYLGVSPG…GGLINPEKAV (495 aa)). D142 (charge relay system) is an active-site residue. N175 and N202 each carry an N-linked (GlcNAc...) asparagine glycan. The active-site Charge relay system is the H218. N233 and N361 each carry an N-linked (GlcNAc...) asparagine glycan. A PA domain is found at 390-464 (DCEKLSANPK…ELGTDILFYI (75 aa)). The active-site Charge relay system is S537.

This sequence belongs to the peptidase S8 family.

The protein resides in the secreted. The protein is Subtilisin-like protease SBT3.10 of Arabidopsis thaliana (Mouse-ear cress).